A 148-amino-acid chain; its full sequence is ATP synthase epsilon chain (148 aa).

This sequence belongs to the ATPase epsilon chain family. As to quaternary structure, F-type ATPases have 2 components, CF(1) - the catalytic core - and CF(0) - the membrane proton channel. CF(1) has five subunits: alpha(3), beta(3), gamma(1), delta(1), epsilon(1). CF(0) has three main subunits: a, b and c.

Its subcellular location is the cell inner membrane. Produces ATP from ADP in the presence of a proton gradient across the membrane. This chain is ATP synthase epsilon chain, found in Paracoccus denitrificans (strain Pd 1222).